A 490-amino-acid polypeptide reads, in one-letter code: GTPase Der (490 aa).

EngA-type G domains follow at residues 3 to 166 (PVVA…MEDL) and 203 to 376 (IKLA…DSST). GTP is bound by residues 9–16 (GRPNVGKS), 56–60 (DTGGI), 118–121 (NKTD), 209–216 (GRPNVGKS), 256–260 (DTAGV), and 321–324 (NKWD). In terms of domain architecture, KH-like spans 377–461 (RRVGTSMLTR…PIRIQFKEGE (85 aa)).

This sequence belongs to the TRAFAC class TrmE-Era-EngA-EngB-Septin-like GTPase superfamily. EngA (Der) GTPase family. In terms of assembly, associates with the 50S ribosomal subunit.

In terms of biological role, GTPase that plays an essential role in the late steps of ribosome biogenesis. The protein is GTPase Der of Escherichia coli O127:H6 (strain E2348/69 / EPEC).